The following is an 85-amino-acid chain: Putative transmembrane protein ORF28 (85 aa).

2 helical membrane-spanning segments follow: residues 32 to 52 and 59 to 79; these read IMLLWWIGILGMLNYNLVQIV and LLSVSTFIVGCGLCIGFMLGI.

The protein resides in the host membrane. This is Putative transmembrane protein ORF28 from Haloarcula hispanica (His1V).